The following is a 121-amino-acid chain: Small ribosomal subunit protein uS13 (121 aa).

Residues 91–121 are disordered; that stretch reads HRRGLPVRGQKTKNNARTRKGPVKTVANKKK.

Belongs to the universal ribosomal protein uS13 family. In terms of assembly, part of the 30S ribosomal subunit. Forms a loose heterodimer with protein S19. Forms two bridges to the 50S subunit in the 70S ribosome.

Its function is as follows. Located at the top of the head of the 30S subunit, it contacts several helices of the 16S rRNA. In the 70S ribosome it contacts the 23S rRNA (bridge B1a) and protein L5 of the 50S subunit (bridge B1b), connecting the 2 subunits; these bridges are implicated in subunit movement. Contacts the tRNAs in the A and P-sites. The polypeptide is Small ribosomal subunit protein uS13 (Staphylococcus epidermidis (strain ATCC 35984 / DSM 28319 / BCRC 17069 / CCUG 31568 / BM 3577 / RP62A)).